We begin with the raw amino-acid sequence, 1906 residues long: Retinoic acid-induced protein 1 (1906 aa).

6 disordered regions span residues Met-1–Gln-261, Arg-273–Ala-299, Tyr-335–Phe-370, Val-469–Gly-520, Ser-538–Ser-571, and Ser-656–Pro-712. Polar residues predominate over residues Lys-13–Thr-24. Low complexity predominate over residues Pro-66–Ala-75. Residues Pro-124–Leu-134 are compositionally biased toward pro residues. The span at Ser-213 to Val-226 shows a compositional bias: low complexity. Over residues Thr-252–Gln-261 the composition is skewed to polar residues. Composition is skewed to low complexity over residues Gln-278–Gln-291 and Ser-339–Ser-353. Ser-339 and Ser-345 each carry phosphoserine. Thr-472 is subject to Phosphothreonine. Polar residues predominate over residues Arg-541 to Asp-563. Ser-568 and Ser-683 each carry phosphoserine. Thr-696 is modified (phosphothreonine). A Phosphoserine modification is found at Ser-805. A Glycyl lysine isopeptide (Lys-Gly) (interchain with G-Cter in SUMO2) cross-link involves residue Lys-811. Lys-819 is covalently cross-linked (Glycyl lysine isopeptide (Lys-Gly) (interchain with G-Cter in SUMO1)). Phosphoserine occurs at positions 880 and 892. Residue Lys-901 forms a Glycyl lysine isopeptide (Lys-Gly) (interchain with G-Cter in SUMO1); alternate linkage. Lys-901 participates in a covalent cross-link: Glycyl lysine isopeptide (Lys-Gly) (interchain with G-Cter in SUMO2); alternate. Over residues Lys-937 to Ser-947 the composition is skewed to polar residues. Disordered regions lie at residues Lys-937–Asp-1299, Phe-1344–Pro-1570, Val-1613–Ser-1637, Ala-1746–Gly-1775, and Glu-1794–Ala-1819. Over residues Lys-950–Pro-962 the composition is skewed to basic and acidic residues. Positions Lys-996–Arg-1005 are enriched in basic residues. A Phosphoserine modification is found at Ser-1064. Position 1068 is a phosphothreonine (Thr-1068). Positions Pro-1101 to Ser-1119 are enriched in low complexity. Ser-1122 carries the post-translational modification Phosphoserine. 2 consecutive short sequence motifs (nuclear localization signal) follow at residues Arg-1160–Leu-1177 and Lys-1223–Val-1240. Residues Arg-1242–Ser-1252 show a composition bias toward low complexity. Residues Ser-1352, Ser-1358, and Ser-1374 each carry the phosphoserine modification. Lys-1425 is covalently cross-linked (Glycyl lysine isopeptide (Lys-Gly) (interchain with G-Cter in SUMO2)). A Phosphoserine modification is found at Ser-1431. The segment covering Pro-1444–Ala-1453 has biased composition (basic residues). 2 stretches are compositionally biased toward polar residues: residues Ser-1482–Asn-1491 and Gln-1517–Tyr-1534. Over residues Ser-1535–Ala-1545 the composition is skewed to basic residues. Positions Ser-1628 to Ser-1637 are enriched in low complexity. Residues Leu-1780–Val-1835 form a C2HC pre-PHD-type zinc finger. Residues Pro-1798 to Pro-1812 are compositionally biased toward basic and acidic residues. The PHD-type zinc-finger motif lies at Met-1855–Lys-1903.

As to expression, expressed in all tissues examined with higher expression in the heart and brain. No expression was seen in the corpus callosum of the brain.

The protein resides in the cytoplasm. The protein localises to the nucleus. Transcriptional regulator of the circadian clock components: CLOCK, BMAL1, BMAL2, PER1/3, CRY1/2, NR1D1/2 and RORA/C. Positively regulates the transcriptional activity of CLOCK a core component of the circadian clock. Regulates transcription through chromatin remodeling by interacting with other proteins in chromatin as well as proteins in the basic transcriptional machinery. May be important for embryonic and postnatal development. May be involved in neuronal differentiation. This is Retinoic acid-induced protein 1 (RAI1) from Homo sapiens (Human).